We begin with the raw amino-acid sequence, 121 residues long: Large ribosomal subunit protein bL12 (121 aa).

This sequence belongs to the bacterial ribosomal protein bL12 family. In terms of assembly, homodimer. Part of the ribosomal stalk of the 50S ribosomal subunit. Forms a multimeric L10(L12)X complex, where L10 forms an elongated spine to which 2 to 4 L12 dimers bind in a sequential fashion. Binds GTP-bound translation factors.

Functionally, forms part of the ribosomal stalk which helps the ribosome interact with GTP-bound translation factors. Is thus essential for accurate translation. This is Large ribosomal subunit protein bL12 from Proteus mirabilis (strain HI4320).